The primary structure comprises 359 residues: Histidinol-phosphate aminotransferase (359 aa).

Residue K217 is modified to N6-(pyridoxal phosphate)lysine.

This sequence belongs to the class-II pyridoxal-phosphate-dependent aminotransferase family. Histidinol-phosphate aminotransferase subfamily. In terms of assembly, homodimer. Pyridoxal 5'-phosphate is required as a cofactor.

It carries out the reaction L-histidinol phosphate + 2-oxoglutarate = 3-(imidazol-4-yl)-2-oxopropyl phosphate + L-glutamate. The protein operates within amino-acid biosynthesis; L-histidine biosynthesis; L-histidine from 5-phospho-alpha-D-ribose 1-diphosphate: step 7/9. The sequence is that of Histidinol-phosphate aminotransferase from Salmonella newport (strain SL254).